The following is a 124-amino-acid chain: Ribonuclease pancreatic (124 aa).

Lys7 and Arg10 together coordinate substrate. The active-site Proton acceptor is the His12. 4 cysteine pairs are disulfide-bonded: Cys26–Cys84, Cys40–Cys95, Cys58–Cys110, and Cys65–Cys72. A glycan (N-linked (GlcNAc...) asparagine; partial) is linked at Asn34. Substrate is bound by residues 41–45, Lys66, and Arg85; that span reads KPVBT. The active-site Proton donor is the His119.

This sequence belongs to the pancreatic ribonuclease family. In terms of assembly, monomer. Interacts with and forms tight 1:1 complexes with RNH1. Dimerization of two such complexes may occur. Interaction with RNH1 inhibits this protein. As to expression, pancreas.

It localises to the secreted. It carries out the reaction an [RNA] containing cytidine + H2O = an [RNA]-3'-cytidine-3'-phosphate + a 5'-hydroxy-ribonucleotide-3'-[RNA].. It catalyses the reaction an [RNA] containing uridine + H2O = an [RNA]-3'-uridine-3'-phosphate + a 5'-hydroxy-ribonucleotide-3'-[RNA].. In terms of biological role, endonuclease that catalyzes the cleavage of RNA on the 3' side of pyrimidine nucleotides. Acts on single-stranded and double-stranded RNA. This chain is Ribonuclease pancreatic (RNASE1), found in Damaliscus korrigum (Topi).